Here is a 96-residue protein sequence, read N- to C-terminus: Co-chaperonin GroES (96 aa).

This sequence belongs to the GroES chaperonin family. Heptamer of 7 subunits arranged in a ring. Interacts with the chaperonin GroEL.

Its subcellular location is the cytoplasm. Functionally, together with the chaperonin GroEL, plays an essential role in assisting protein folding. The GroEL-GroES system forms a nano-cage that allows encapsulation of the non-native substrate proteins and provides a physical environment optimized to promote and accelerate protein folding. GroES binds to the apical surface of the GroEL ring, thereby capping the opening of the GroEL channel. The polypeptide is Co-chaperonin GroES (Actinobacillus succinogenes (strain ATCC 55618 / DSM 22257 / CCUG 43843 / 130Z)).